Consider the following 439-residue polypeptide: tRNA(Ile)-lysidine synthase (439 aa).

25 to 30 lines the ATP pocket; that stretch reads SGGLDS.

Belongs to the tRNA(Ile)-lysidine synthase family.

The protein localises to the cytoplasm. It catalyses the reaction cytidine(34) in tRNA(Ile2) + L-lysine + ATP = lysidine(34) in tRNA(Ile2) + AMP + diphosphate + H(+). Ligates lysine onto the cytidine present at position 34 of the AUA codon-specific tRNA(Ile) that contains the anticodon CAU, in an ATP-dependent manner. Cytidine is converted to lysidine, thus changing the amino acid specificity of the tRNA from methionine to isoleucine. The sequence is that of tRNA(Ile)-lysidine synthase from Edwardsiella ictaluri (strain 93-146).